The primary structure comprises 175 residues: Large ribosomal subunit protein uL6 (175 aa).

It belongs to the universal ribosomal protein uL6 family. As to quaternary structure, part of the 50S ribosomal subunit.

Its function is as follows. This protein binds to the 23S rRNA, and is important in its secondary structure. It is located near the subunit interface in the base of the L7/L12 stalk, and near the tRNA binding site of the peptidyltransferase center. This chain is Large ribosomal subunit protein uL6, found in Xylella fastidiosa (strain M23).